A 599-amino-acid chain; its full sequence is MTTQVPPSALLPLNPEQLARLQAATTDLTPTQLAWVSGYFWGVLNQQPAALAATPAPAAEMPGITIISASQTGNARRVAEALRDDLLAAKLNVKLVNAGDYKFKQIASEKLLIVVTSTQGEGEPPEEAVALHKFLFSKKAPKLENTAFAVFSLGDSSYEFFCQSGKDFDSKLAELGGERLLDRVDADVEYQAAASEWRARVVDALKSRAPVAAPSQSVATGAVNEIHTSPYSKDAPLVASLSVNQKITGRNSEKDVRHIEIDLGDSGLRYQPGDALGVWYQNDPALVKELVELLWLKGDEPVTVEGKTLPLNEALQWHFELTVNTANIVENYATLTRSETLLPLVGDKAKLQHYAATTPIVDMVRFSPAQLDAEALINLLRPLTPRLYSIASSQAEVENEVHVTVGVVRYDVEGRARAGGASSFLADRVEEEGEVRVFIEHNDNFRLPANPETPVIMIGPGTGIAPFRAFMQQRAADEAPGKNWLFFGNPHFTEDFLYQVEWQRYVKDGVLTRIDLAWSRDQKEKVYVQDKLREQGAELWRWINDGAHIYVCGDANRMAKDVEQALLEVIAEFGGMDIEAADEFLSELRVERRYQRDVY.

In terms of domain architecture, Flavodoxin-like spans 64–202 (ITIISASQTG…AASEWRARVV (139 aa)). FMN-binding positions include 70–75 (SQTGNA), 117–120 (STQG), and 153–162 (LGDSSYEFFC). The 215-residue stretch at 234–448 (DAPLVASLSV…IEHNDNFRLP (215 aa)) folds into the FAD-binding FR-type domain. FAD contacts are provided by residues Thr322, Ala356, 386–389 (RLYS), 404–406 (TVG), Tyr410, and 419–422 (GGAS). NADP(+) contacts are provided by residues 519 to 520 (SR), 525 to 529 (KVYVQ), and Asp561. Tyr599 is an FAD binding site.

The protein belongs to the NADPH-dependent sulphite reductase flavoprotein subunit CysJ family. It in the N-terminal section; belongs to the flavodoxin family. This sequence in the C-terminal section; belongs to the flavoprotein pyridine nucleotide cytochrome reductase family. As to quaternary structure, alpha(8)-beta(8). The alpha component is a flavoprotein, the beta component is a hemoprotein. FAD serves as cofactor. Requires FMN as cofactor.

It catalyses the reaction hydrogen sulfide + 3 NADP(+) + 3 H2O = sulfite + 3 NADPH + 4 H(+). It participates in sulfur metabolism; hydrogen sulfide biosynthesis; hydrogen sulfide from sulfite (NADPH route): step 1/1. Functionally, component of the sulfite reductase complex that catalyzes the 6-electron reduction of sulfite to sulfide. This is one of several activities required for the biosynthesis of L-cysteine from sulfate. The flavoprotein component catalyzes the electron flow from NADPH -&gt; FAD -&gt; FMN to the hemoprotein component. This Shigella boydii serotype 4 (strain Sb227) protein is Sulfite reductase [NADPH] flavoprotein alpha-component.